A 54-amino-acid polypeptide reads, in one-letter code: U-reduvitoxin-Pr1a (54 aa).

Residues 1–19 form the signal peptide; it reads MKLLGLLLLVFTFMALAFA. Intrachain disulfides connect cysteine 24–cysteine 39, cysteine 31–cysteine 44, and cysteine 38–cysteine 51.

The protein belongs to the venom Ptu1-like knottin family. As to expression, expressed by the venom gland (posterior main gland) (at protein level).

Its subcellular location is the secreted. In terms of biological role, binds reversibly and blocks P/Q-type voltage-gated calcium channels (Cav). This Platymeris rhadamanthus (Red spot assassin bug) protein is U-reduvitoxin-Pr1a.